The primary structure comprises 192 residues: Erythropoietin (192 aa).

Positions 1-27 are cleaved as a signal peptide; the sequence is MGVHECPAWLWLLLSLVSLPLGLPVPG. 2 disulfide bridges follow: Cys-34–Cys-187 and Cys-56–Cys-60. Asn-51 carries N-linked (GlcNAc...) asparagine glycosylation. 2 N-linked (GlcNAc...) asparagine glycosylation sites follow: Asn-65 and Asn-110. The O-linked (GalNAc...) serine glycan is linked to Ser-152.

The protein belongs to the EPO/TPO family. Produced by kidney or liver of adult mammals and by liver of fetal or neonatal mammals.

The protein localises to the secreted. Functionally, hormone involved in the regulation of erythrocyte proliferation and differentiation and the maintenance of a physiological level of circulating erythrocyte mass. Binds to EPOR leading to EPOR dimerization and JAK2 activation thereby activating specific downstream effectors, including STAT1 and STAT3. The polypeptide is Erythropoietin (EPO) (Macaca fascicularis (Crab-eating macaque)).